The primary structure comprises 476 residues: MGIKFLEVIKPFCVILPEIQKPERKIQFKEKVLWTAITLFIFLVCCQIPLFGIMSSDSADPFYWMRVILASNRGTLMELGISPIVTSGLIMQLLAGAKIIEVGDTPKDRALFNGAQKLFGMTITIGQSIVYVMTGMYGDPSEMGAGVCLLITIQLFVAGLIVLLLDELLQKGYGLGSGISLFIATNICETIVWKAFSPTTVNTGRGMEFEGAIIALFHLLATRTDKVRALREAFYRQNLPNLMNLIATIFVFAVVIYFQGFRVDLPIKSARYRGQYNTYPIKLFYTSNIPIILQSALVSNLYVISQMLSARFSGNLLVSLLGTWSDTSSGGPARAYPVGGLCYYLSPPESFGSVLEDPVHAVVYIVFMLGSCAFFSKTWIEVSGSSAKDVAKQLKEQQMVMRGHRETSMVHELNRYIPTAAAFGGLCIGALSVLADFLGAIGSGTGILLAVTIIYQYFEIFVKEQSEVGSMGALLF.

Over 1–33 (MGIKFLEVIKPFCVILPEIQKPERKIQFKEKVL) the chain is Cytoplasmic. The helical transmembrane segment at 34 to 53 (WTAITLFIFLVCCQIPLFGI) threads the bilayer. The Lumenal portion of the chain corresponds to 54–76 (MSSDSADPFYWMRVILASNRGTL). The helical transmembrane segment at 77-96 (MELGISPIVTSGLIMQLLAG) threads the bilayer. Residues 97-117 (AKIIEVGDTPKDRALFNGAQK) are Cytoplasmic-facing. Residues 118 to 138 (LFGMTITIGQSIVYVMTGMYG) traverse the membrane as a helical segment. The Lumenal portion of the chain corresponds to 139-144 (DPSEMG). Residues 145–165 (AGVCLLITIQLFVAGLIVLLL) form a helical membrane-spanning segment. At 166–172 (DELLQKG) the chain is on the cytoplasmic side. A helical membrane pass occupies residues 173–193 (YGLGSGISLFIATNICETIVW). Residues 194-240 (KAFSPTTVNTGRGMEFEGAIIALFHLLATRTDKVRALREAFYRQNLP) lie on the Lumenal side of the membrane. Residues 241–261 (NLMNLIATIFVFAVVIYFQGF) form a helical membrane-spanning segment. Topologically, residues 262–288 (RVDLPIKSARYRGQYNTYPIKLFYTSN) are cytoplasmic. A helical membrane pass occupies residues 289-309 (IPIILQSALVSNLYVISQMLS). Over 310–354 (ARFSGNLLVSLLGTWSDTSSGGPARAYPVGGLCYYLSPPESFGSV) the chain is Lumenal. Residues 355–375 (LEDPVHAVVYIVFMLGSCAFF) form a helical membrane-spanning segment. Residues 376–420 (SKTWIEVSGSSAKDVAKQLKEQQMVMRGHRETSMVHELNRYIPTA) lie on the Cytoplasmic side of the membrane. Residues 421 to 441 (AAFGGLCIGALSVLADFLGAI) traverse the membrane as a helical segment. The Lumenal portion of the chain corresponds to 442–445 (GSGT). The chain crosses the membrane as a helical span at residues 446–462 (GILLAVTIIYQYFEIFV). Over 463-476 (KEQSEVGSMGALLF) the chain is Cytoplasmic.

It belongs to the SecY/SEC61-alpha family. As to quaternary structure, the SEC61 channel-forming translocon complex consists of channel-forming core components SEC61A1, SEC61B and SEC61G and different auxiliary components such as SEC62 and SEC63. The SEC61 channel associates with the multi-pass translocon (MPT) complex.

The protein localises to the endoplasmic reticulum membrane. Its function is as follows. Component of SEC61 channel-forming translocon complex that mediates transport of signal peptide-containing precursor polypeptides across the endoplasmic reticulum (ER). Forms a ribosome receptor and a gated pore in the ER membrane, both functions required for cotranslational translocation of nascent polypeptides. May cooperate with auxiliary protein SEC62, SEC63 and HSPA5/BiP to enable post-translational transport of small presecretory proteins. The SEC61 channel is also involved in ER membrane insertion of transmembrane proteins: it mediates membrane insertion of the first few transmembrane segments of proteins, while insertion of subsequent transmembrane regions of multi-pass membrane proteins is mediated by the multi-pass translocon (MPT) complex. The SEC61 channel cooperates with the translocating protein TRAM1 to import nascent proteins into the ER. Controls the passive efflux of calcium ions from the ER lumen to the cytosol through SEC61 channel, contributing to the maintenance of cellular calcium homeostasis. Plays a critical role in nephrogenesis, specifically at pronephros stage. In Bos taurus (Bovine), this protein is Protein transport protein Sec61 subunit alpha isoform 1 (SEC61A1).